We begin with the raw amino-acid sequence, 256 residues long: 1-(5-phosphoribosyl)-5-[(5-phosphoribosylamino)methylideneamino] imidazole-4-carboxamide isomerase (256 aa).

The active-site Proton acceptor is Asp8. Catalysis depends on Asp129, which acts as the Proton donor.

Belongs to the HisA/HisF family.

It localises to the cytoplasm. The catalysed reaction is 1-(5-phospho-beta-D-ribosyl)-5-[(5-phospho-beta-D-ribosylamino)methylideneamino]imidazole-4-carboxamide = 5-[(5-phospho-1-deoxy-D-ribulos-1-ylimino)methylamino]-1-(5-phospho-beta-D-ribosyl)imidazole-4-carboxamide. It functions in the pathway amino-acid biosynthesis; L-histidine biosynthesis; L-histidine from 5-phospho-alpha-D-ribose 1-diphosphate: step 4/9. The sequence is that of 1-(5-phosphoribosyl)-5-[(5-phosphoribosylamino)methylideneamino] imidazole-4-carboxamide isomerase from Picosynechococcus sp. (strain ATCC 27264 / PCC 7002 / PR-6) (Agmenellum quadruplicatum).